A 307-amino-acid chain; its full sequence is Zinc transporter ZIP9 (307 aa).

A helical transmembrane segment spans residues 4–24 (FISISLLSLAMLVGCYVAGII). The N-linked (GlcNAc...) asparagine glycan is linked to Asn-29. 5 helical membrane-spanning segments follow: residues 35–55 (LKLVTVLGAGLLCGTALAVIV), 106–126 (AYIGVSLVLGFVFMLLVDQIG), 146–166 (ITTTLGLVVHAAADGVALGAA), 176–196 (LIVFVAIMLHKAPAAFGLVSF), and 210–230 (HLLVFALAAPVMSMVTYLGLS). The N-linked (GlcNAc...) asparagine glycan is linked to Asn-241. The next 2 helical transmembrane spans lie at 244–264 (GVAMLFSAGTFLYVATVHVLP) and 286–306 (LEVAALVLGCLIPLILSVGHQ).

It belongs to the ZIP transporter (TC 2.A.5) family. Highly expressed in pancreas, testis, and pituitary and moderately in the kidney, liver, uterus, heart, prostate, and brain, whereas expression is lower in the ovary and colon.

It localises to the golgi apparatus. It is found in the trans-Golgi network membrane. Its subcellular location is the cell membrane. The protein localises to the cytoplasm. The protein resides in the perinuclear region. It localises to the mitochondrion. It is found in the nucleus. It carries out the reaction Zn(2+)(in) = Zn(2+)(out). In terms of biological role, transports zinc ions across cell and organelle membranes into the cytoplasm and regulates intracellular zinc homeostasis. Participates in the zinc ions efflux out of the secretory compartments. Regulates intracellular zinc level, resulting in the enhancement of AKT1 and MAPK3/MAPK1 (Erk1/2) phosphorylation in response to the BCR activation. Also functions as a membrane androgen receptor that mediates, through a G protein, the non-classical androgen signaling pathway, characterized by the activation of MAPK3/MAPK1 (Erk1/2) and transcription factors CREB1 or ATF1. This pathway contributes to CLDN1 and CLDN5 expression and tight junction formation between adjacent Sertoli cells. Mediates androgen-induced vascular endothelial cell proliferation through activation of an inhibitory G protein leading to the AKT1 and MAPK3/MAPK1 (Erk1/2) activation which in turn modulate inhibition (phosphorylation) of GSK3B and CCND1 transcription. Moreover, has dual functions as a membrane-bound androgen receptor and as an androgen-dependent zinc transporter both of which are mediated through an inhibitory G protein (Gi) that mediates both MAP kinase and zinc signaling leading to the androgen-dependent apoptotic process. In Homo sapiens (Human), this protein is Zinc transporter ZIP9.